We begin with the raw amino-acid sequence, 366 residues long: NAD(P)H-quinone oxidoreductase subunit 1, chloroplastic (366 aa).

8 helical membrane passes run 29 to 49 (WITA…LVIV), 97 to 117 (LLFS…YLVI), 130 to 150 (IGVF…FMAG), 166 to 186 (VAQA…ISLL), 202 to 222 (FGFW…FLIA), 254 to 274 (FGLF…FVTV), 307 to 327 (VIIG…ISIV), and 340 to 360 (LLNL…LLTA).

Belongs to the complex I subunit 1 family. NDH is composed of at least 16 different subunits, 5 of which are encoded in the nucleus.

The protein localises to the plastid. It localises to the chloroplast thylakoid membrane. The catalysed reaction is a plastoquinone + NADH + (n+1) H(+)(in) = a plastoquinol + NAD(+) + n H(+)(out). It catalyses the reaction a plastoquinone + NADPH + (n+1) H(+)(in) = a plastoquinol + NADP(+) + n H(+)(out). Functionally, NDH shuttles electrons from NAD(P)H:plastoquinone, via FMN and iron-sulfur (Fe-S) centers, to quinones in the photosynthetic chain and possibly in a chloroplast respiratory chain. The immediate electron acceptor for the enzyme in this species is believed to be plastoquinone. Couples the redox reaction to proton translocation, and thus conserves the redox energy in a proton gradient. This chain is NAD(P)H-quinone oxidoreductase subunit 1, chloroplastic, found in Anthoceros angustus (Hornwort).